A 103-amino-acid chain; its full sequence is uncharacterized protein (103 aa).

A helical membrane pass occupies residues phenylalanine 37–isoleucine 57.

The protein resides in the membrane. This is an uncharacterized protein from Saccharomyces cerevisiae (strain ATCC 204508 / S288c) (Baker's yeast).